The primary structure comprises 346 residues: Holliday junction branch migration complex subunit RuvB (346 aa).

Residues 1 to 182 (MSERLVTSNE…LGVLCSMEYY (182 aa)) are large ATPase domain (RuvB-L). ATP contacts are provided by residues Leu-21, Arg-22, Gly-63, Lys-66, Thr-67, Thr-68, 129-131 (EDY), Arg-172, Tyr-182, and Arg-219. A Mg(2+)-binding site is contributed by Thr-67. Residues 183 to 253 (TDEQLKEIII…AAKKSLEILE (71 aa)) form a small ATPAse domain (RuvB-S) region. The segment at 256–346 (GEGFDRIDNK…DSKQCTLFEK (91 aa)) is head domain (RuvB-H). The DNA site is built by Arg-311 and Arg-316.

It belongs to the RuvB family. In terms of assembly, homohexamer. Forms an RuvA(8)-RuvB(12)-Holliday junction (HJ) complex. HJ DNA is sandwiched between 2 RuvA tetramers; dsDNA enters through RuvA and exits via RuvB. An RuvB hexamer assembles on each DNA strand where it exits the tetramer. Each RuvB hexamer is contacted by two RuvA subunits (via domain III) on 2 adjacent RuvB subunits; this complex drives branch migration. In the full resolvosome a probable DNA-RuvA(4)-RuvB(12)-RuvC(2) complex forms which resolves the HJ.

It localises to the cytoplasm. The enzyme catalyses ATP + H2O = ADP + phosphate + H(+). The RuvA-RuvB-RuvC complex processes Holliday junction (HJ) DNA during genetic recombination and DNA repair, while the RuvA-RuvB complex plays an important role in the rescue of blocked DNA replication forks via replication fork reversal (RFR). RuvA specifically binds to HJ cruciform DNA, conferring on it an open structure. The RuvB hexamer acts as an ATP-dependent pump, pulling dsDNA into and through the RuvAB complex. RuvB forms 2 homohexamers on either side of HJ DNA bound by 1 or 2 RuvA tetramers; 4 subunits per hexamer contact DNA at a time. Coordinated motions by a converter formed by DNA-disengaged RuvB subunits stimulates ATP hydrolysis and nucleotide exchange. Immobilization of the converter enables RuvB to convert the ATP-contained energy into a lever motion, pulling 2 nucleotides of DNA out of the RuvA tetramer per ATP hydrolyzed, thus driving DNA branch migration. The RuvB motors rotate together with the DNA substrate, which together with the progressing nucleotide cycle form the mechanistic basis for DNA recombination by continuous HJ branch migration. Branch migration allows RuvC to scan DNA until it finds its consensus sequence, where it cleaves and resolves cruciform DNA. The sequence is that of Holliday junction branch migration complex subunit RuvB from Clostridium perfringens (strain 13 / Type A).